Reading from the N-terminus, the 403-residue chain is NADH-quinone oxidoreductase subunit D (403 aa).

This sequence belongs to the complex I 49 kDa subunit family. In terms of assembly, NDH-1 is composed of 14 different subunits. Subunits NuoB, C, D, E, F, and G constitute the peripheral sector of the complex.

It is found in the cell inner membrane. It catalyses the reaction a quinone + NADH + 5 H(+)(in) = a quinol + NAD(+) + 4 H(+)(out). Functionally, NDH-1 shuttles electrons from NADH, via FMN and iron-sulfur (Fe-S) centers, to quinones in the respiratory chain. The immediate electron acceptor for the enzyme in this species is believed to be ubiquinone. Couples the redox reaction to proton translocation (for every two electrons transferred, four hydrogen ions are translocated across the cytoplasmic membrane), and thus conserves the redox energy in a proton gradient. The protein is NADH-quinone oxidoreductase subunit D of Erythrobacter litoralis (strain HTCC2594).